The primary structure comprises 432 residues: Adenosylhomocysteinase (432 aa).

Residues Thr56, Asp131, and Glu156 each coordinate substrate. Residue 157 to 159 (TTT) participates in NAD(+) binding. Substrate contacts are provided by Lys186 and Asp190. NAD(+) contacts are provided by residues Asn191, 222–227 (GDVGKG), Glu243, 299–301 (IGH), and Asn346.

It belongs to the adenosylhomocysteinase family. It depends on NAD(+) as a cofactor.

The enzyme catalyses S-adenosyl-L-homocysteine + H2O = L-homocysteine + adenosine. Its pathway is amino-acid biosynthesis; L-homocysteine biosynthesis; L-homocysteine from S-adenosyl-L-homocysteine: step 1/1. Its function is as follows. Adenosylhomocysteine is a competitive inhibitor of S-adenosyl-L-methionine-dependent methyl transferase reactions; therefore adenosylhomocysteinase may play a key role in the control of methylations via regulation of the intracellular concentration of adenosylhomocysteine. In Anopheles gambiae (African malaria mosquito), this protein is Adenosylhomocysteinase (Ahcy13).